Here is a 414-residue protein sequence, read N- to C-terminus: Gamma-glutamyl phosphate reductase (414 aa).

It belongs to the gamma-glutamyl phosphate reductase family.

The protein localises to the cytoplasm. The enzyme catalyses L-glutamate 5-semialdehyde + phosphate + NADP(+) = L-glutamyl 5-phosphate + NADPH + H(+). Its pathway is amino-acid biosynthesis; L-proline biosynthesis; L-glutamate 5-semialdehyde from L-glutamate: step 2/2. Catalyzes the NADPH-dependent reduction of L-glutamate 5-phosphate into L-glutamate 5-semialdehyde and phosphate. The product spontaneously undergoes cyclization to form 1-pyrroline-5-carboxylate. The protein is Gamma-glutamyl phosphate reductase of Kosmotoga olearia (strain ATCC BAA-1733 / DSM 21960 / TBF 19.5.1).